The chain runs to 482 residues: Ribosomal protein S6 kinase beta-2 (482 aa).

The tract at residues 1 to 26 (MAAVFDLDLETEEGSEGEGEPELSPA) is disordered. The span at 7–21 (LDLETEEGSEGEGEP) shows a compositional bias: acidic residues. Residue serine 15 is modified to Phosphoserine. The Protein kinase domain maps to 67–328 (FELLRVLGKG…AADVQRHPFF (262 aa)). ATP contacts are provided by residues 73 to 81 (LGKGGYGKV) and lysine 99. Aspartate 194 functions as the Proton acceptor in the catalytic mechanism. One can recognise an AGC-kinase C-terminal domain in the interval 329–399 (RHMNWDDLLA…VAPSVLDSIK (71 aa)). The tract at residues 407–482 (KLRSPRRLNS…SKRGRGRPGR (76 aa)) is disordered. Phosphoserine is present on residues serine 417 and serine 423. A compositionally biased stretch (pro residues) spans 437 to 466 (PSLPEPTELPLPPLLPPPPPSTTAPLPIRP). The Nuclear localization signal signature appears at 471 to 477 (KKSKRGR). Residues 471-482 (KKSKRGRGRPGR) are compositionally biased toward basic residues. At serine 473 the chain carries Phosphoserine; by PKC.

Belongs to the protein kinase superfamily. AGC Ser/Thr protein kinase family. S6 kinase subfamily. Phosphorylated and activated by MTOR. Phosphorylation by PKC within the NLS in response to mitogenic stimuli causes cytoplasmic retention.

The protein localises to the cytoplasm. It localises to the nucleus. The enzyme catalyses L-seryl-[protein] + ATP = O-phospho-L-seryl-[protein] + ADP + H(+). It catalyses the reaction L-threonyl-[protein] + ATP = O-phospho-L-threonyl-[protein] + ADP + H(+). Its function is as follows. Phosphorylates specifically ribosomal protein S6. Seems to act downstream of mTOR signaling in response to growth factors and nutrients to promote cell proliferation, cell growth and cell cycle progression in an alternative pathway regulated by MEAK7. In Homo sapiens (Human), this protein is Ribosomal protein S6 kinase beta-2 (RPS6KB2).